A 200-amino-acid polypeptide reads, in one-letter code: Holliday junction resolvase RecU (200 aa).

Positions 1–25 (MTIRYPNGKRYNQASQPQKTPIKTH) are disordered. Polar residues predominate over residues 10 to 25 (RYNQASQPQKTPIKTH). Mg(2+)-binding residues include Thr85, Asp87, Glu100, and Gln119.

It belongs to the RecU family. The cofactor is Mg(2+).

It localises to the cytoplasm. The catalysed reaction is Endonucleolytic cleavage at a junction such as a reciprocal single-stranded crossover between two homologous DNA duplexes (Holliday junction).. Endonuclease that resolves Holliday junction intermediates in genetic recombination. Cleaves mobile four-strand junctions by introducing symmetrical nicks in paired strands. Promotes annealing of linear ssDNA with homologous dsDNA. Required for DNA repair, homologous recombination and chromosome segregation. This chain is Holliday junction resolvase RecU, found in Bacillus cereus (strain G9842).